The primary structure comprises 137 residues: Large ribosomal subunit protein uL16 (137 aa).

Belongs to the universal ribosomal protein uL16 family. As to quaternary structure, part of the 50S ribosomal subunit.

In terms of biological role, binds 23S rRNA and is also seen to make contacts with the A and possibly P site tRNAs. The polypeptide is Large ribosomal subunit protein uL16 (Streptococcus equi subsp. zooepidemicus (strain H70)).